The sequence spans 239 residues: tRNA (guanine-N(7)-)-methyltransferase (239 aa).

4 residues coordinate S-adenosyl-L-methionine: Glu-69, Glu-94, Asp-121, and Asp-144. The active site involves Asp-144. Lys-148 serves as a coordination point for substrate. An interaction with RNA region spans residues 150–155 (RHNKRR). Residues Asp-180 and 217-220 (TKFE) contribute to the substrate site.

It belongs to the class I-like SAM-binding methyltransferase superfamily. TrmB family. As to quaternary structure, monomer.

It carries out the reaction guanosine(46) in tRNA + S-adenosyl-L-methionine = N(7)-methylguanosine(46) in tRNA + S-adenosyl-L-homocysteine. Its pathway is tRNA modification; N(7)-methylguanine-tRNA biosynthesis. Its function is as follows. Catalyzes the formation of N(7)-methylguanine at position 46 (m7G46) in tRNA. The polypeptide is tRNA (guanine-N(7)-)-methyltransferase (Escherichia coli O6:H1 (strain CFT073 / ATCC 700928 / UPEC)).